A 225-amino-acid polypeptide reads, in one-letter code: Urease accessory protein UreG (225 aa).

25-32 (GPVGAGKT) contributes to the GTP binding site.

It belongs to the SIMIBI class G3E GTPase family. UreG subfamily. Homodimer. UreD, UreF and UreG form a complex that acts as a GTP-hydrolysis-dependent molecular chaperone, activating the urease apoprotein by helping to assemble the nickel containing metallocenter of UreC. The UreE protein probably delivers the nickel.

The protein resides in the cytoplasm. Functionally, facilitates the functional incorporation of the urease nickel metallocenter. This process requires GTP hydrolysis, probably effectuated by UreG. The protein is Urease accessory protein UreG of Haemophilus influenzae (strain ATCC 51907 / DSM 11121 / KW20 / Rd).